The sequence spans 521 residues: Medium/long-chain-fatty-acid--[acyl-carrier-protein] ligase MbtM (521 aa).

Residues 146-172 are disordered; it reads RRCPEPPAPHANPAILQGTAGSTGTPK.

It belongs to the ATP-dependent AMP-binding enzyme family.

It carries out the reaction a long-chain fatty acid + holo-[ACP] + ATP = a long-chain fatty acyl-[ACP] + AMP + diphosphate. The catalysed reaction is a medium-chain fatty acid + holo-[ACP] + ATP = a medium-chain fatty acyl-[ACP] + AMP + diphosphate. It participates in siderophore biosynthesis; mycobactin biosynthesis. Activates lipidic moieties required for mycobactin biosynthesis. Converts medium- to long-chain aliphatic fatty acids into acyl adenylate, which is further transferred on to the phosphopantetheine arm of the carrier protein MbtL. The polypeptide is Medium/long-chain-fatty-acid--[acyl-carrier-protein] ligase MbtM (mbtM) (Mycolicibacterium paratuberculosis (strain ATCC BAA-968 / K-10) (Mycobacterium paratuberculosis)).